A 124-amino-acid polypeptide reads, in one-letter code: Small ribosomal subunit protein uS12 (124 aa).

A disordered region spans residues 1-25; that stretch reads MARINQLVRKPRRARAKKSDVPALE. A 3-methylthioaspartic acid modification is found at Asp-89. The disordered stretch occupies residues 103-124; sequence DTAGVSGRRRGRSKYGEKKPKE.

This sequence belongs to the universal ribosomal protein uS12 family. Part of the 30S ribosomal subunit. Contacts proteins S8 and S17. May interact with IF1 in the 30S initiation complex.

With S4 and S5 plays an important role in translational accuracy. In terms of biological role, interacts with and stabilizes bases of the 16S rRNA that are involved in tRNA selection in the A site and with the mRNA backbone. Located at the interface of the 30S and 50S subunits, it traverses the body of the 30S subunit contacting proteins on the other side and probably holding the rRNA structure together. The combined cluster of proteins S8, S12 and S17 appears to hold together the shoulder and platform of the 30S subunit. In Coxiella burnetii (strain Dugway 5J108-111), this protein is Small ribosomal subunit protein uS12.